The sequence spans 604 residues: Phosphomethylpyrimidine synthase (604 aa).

Substrate-binding positions include N218, M247, Y276, H312, 332–334, 373–376, and E412; these read SRG and DGLR. Residue H416 coordinates Zn(2+). Y439 is a substrate binding site. Position 480 (H480) interacts with Zn(2+). C560, C563, and C568 together coordinate [4Fe-4S] cluster.

This sequence belongs to the ThiC family. Homodimer. Requires [4Fe-4S] cluster as cofactor.

It carries out the reaction 5-amino-1-(5-phospho-beta-D-ribosyl)imidazole + S-adenosyl-L-methionine = 4-amino-2-methyl-5-(phosphooxymethyl)pyrimidine + CO + 5'-deoxyadenosine + formate + L-methionine + 3 H(+). It functions in the pathway cofactor biosynthesis; thiamine diphosphate biosynthesis. Catalyzes the synthesis of the hydroxymethylpyrimidine phosphate (HMP-P) moiety of thiamine from aminoimidazole ribotide (AIR) in a radical S-adenosyl-L-methionine (SAM)-dependent reaction. This chain is Phosphomethylpyrimidine synthase, found in Zymomonas mobilis subsp. mobilis (strain ATCC 31821 / ZM4 / CP4).